The sequence spans 368 residues: Flagellar P-ring protein 1 (368 aa).

An N-terminal signal peptide occupies residues 1-24; the sequence is MIFKQIRRLIAAALLAALSLPAAA.

Belongs to the FlgI family. The basal body constitutes a major portion of the flagellar organelle and consists of four rings (L,P,S, and M) mounted on a central rod.

It is found in the periplasm. It localises to the bacterial flagellum basal body. Its function is as follows. Assembles around the rod to form the L-ring and probably protects the motor/basal body from shearing forces during rotation. The protein is Flagellar P-ring protein 1 of Chromobacterium violaceum (strain ATCC 12472 / DSM 30191 / JCM 1249 / CCUG 213 / NBRC 12614 / NCIMB 9131 / NCTC 9757 / MK).